The sequence spans 130 residues: Small ribosomal subunit protein uS9 (130 aa).

Residues G102–R130 are disordered. The span at K111–R130 shows a compositional bias: basic residues.

Belongs to the universal ribosomal protein uS9 family.

This Finegoldia magna (strain ATCC 29328 / DSM 20472 / WAL 2508) (Peptostreptococcus magnus) protein is Small ribosomal subunit protein uS9.